The following is a 430-amino-acid chain: 3-phosphoshikimate 1-carboxyvinyltransferase (430 aa).

Lys23, Ser24, and Arg28 together coordinate 3-phosphoshikimate. Lys23 lines the phosphoenolpyruvate pocket. Residues Gly95 and Arg123 each contribute to the phosphoenolpyruvate site. The 3-phosphoshikimate site is built by Ser169, Gln171, Asp315, and Lys342. Gln171 serves as a coordination point for phosphoenolpyruvate. The active-site Proton acceptor is Asp315. Phosphoenolpyruvate-binding residues include Arg346 and Arg388.

The protein belongs to the EPSP synthase family. Monomer.

The protein localises to the cytoplasm. The enzyme catalyses 3-phosphoshikimate + phosphoenolpyruvate = 5-O-(1-carboxyvinyl)-3-phosphoshikimate + phosphate. It functions in the pathway metabolic intermediate biosynthesis; chorismate biosynthesis; chorismate from D-erythrose 4-phosphate and phosphoenolpyruvate: step 6/7. Functionally, catalyzes the transfer of the enolpyruvyl moiety of phosphoenolpyruvate (PEP) to the 5-hydroxyl of shikimate-3-phosphate (S3P) to produce enolpyruvyl shikimate-3-phosphate and inorganic phosphate. The sequence is that of 3-phosphoshikimate 1-carboxyvinyltransferase from Streptococcus pyogenes serotype M3 (strain ATCC BAA-595 / MGAS315).